A 258-amino-acid polypeptide reads, in one-letter code: Synapse differentiation-inducing gene protein 1 (258 aa).

Residues 1–181 (MAGVVEQKSG…NFLVMPPRDH (181 aa)) lie on the Cytoplasmic side of the membrane. Residue Ser137 is modified to Phosphoserine. Residues 182-202 (LGLSVFSMLCCFWPLGIAAFY) traverse the membrane as a helical segment. Residues 203 to 228 (LSHETNKAVAKGDFHQASTSSRRALF) lie on the Extracellular side of the membrane. Residues 229–249 (LAVLSITIGTGIYVGVAVALI) constitute an intramembrane region (helical). Residues 250-258 (AYLSKSNHL) are Extracellular-facing.

This sequence belongs to the CD225/Dispanin family. As to quaternary structure, homodimer. Interacts with GRIA1 and GRIA2.

It is found in the cell membrane. The protein resides in the early endosome membrane. Its subcellular location is the postsynaptic density membrane. It localises to the synapse. The protein localises to the cell projection. It is found in the dendrite. The protein resides in the dendritic spine. Functionally, may regulate AMPA receptor content at nascent synapses, and have a role in postsynaptic development and maturation. The sequence is that of Synapse differentiation-inducing gene protein 1 (SYNDIG1) from Bos taurus (Bovine).